The following is a 71-amino-acid chain: Vitellogenin-B2 (71 aa).

The signal sequence occupies residues 1–15 (MRGIILALLLALAGC). The Vitellogenin domain occupies 24-71 (FSESKTYVYNYEGIILNGIPENGLARSGIKLNCKVELSGYAQRSYMLK).

Produced by the liver, secreted into the blood and then sequestered by receptor mediated endocytosis into growing oocytes, where it is generally cleaved, giving rise to the respective yolk components.

Its function is as follows. Precursor of the major egg-yolk proteins that are sources of nutrients during early development of oviparous organisms. The polypeptide is Vitellogenin-B2 (Xenopus laevis (African clawed frog)).